Consider the following 89-residue polypeptide: Small ribosomal subunit protein uS14 (89 aa).

The interval 32 to 51 is disordered; the sequence is DYEGLQKLPKNSSPVRLHNR.

The protein belongs to the universal ribosomal protein uS14 family. In terms of assembly, part of the 30S ribosomal subunit. Contacts proteins S3 and S10.

In terms of biological role, binds 16S rRNA, required for the assembly of 30S particles and may also be responsible for determining the conformation of the 16S rRNA at the A site. The protein is Small ribosomal subunit protein uS14 of Christiangramia forsetii (strain DSM 17595 / CGMCC 1.15422 / KT0803) (Gramella forsetii).